The primary structure comprises 38 residues: Plastocyanin (38 aa).

A Plastocyanin-like domain is found at 1 to 38; sequence AQTVEVKMGADGGLLVFEPAKAGPHNVVFDEDNIPPGV. Histidine 25 provides a ligand contact to Cu cation.

It belongs to the plastocyanin family. It depends on Cu(2+) as a cofactor.

Its subcellular location is the plastid. The protein localises to the chloroplast thylakoid membrane. Functionally, participates in electron transfer between P700 and the cytochrome b6-f complex in photosystem I. The protein is Plastocyanin (PETE) of Thalassiosira oceanica (Marine diatom).